The primary structure comprises 90 residues: UPF0237 protein NMA1909 (90 aa).

An ACT domain is found at 5-83 (VITVIGKDRV…LDIRMQNEEI (79 aa)).

This sequence belongs to the UPF0237 family.

This is UPF0237 protein NMA1909 from Neisseria meningitidis serogroup A / serotype 4A (strain DSM 15465 / Z2491).